A 542-amino-acid chain; its full sequence is 4-coumarate--CoA ligase-like 1 (542 aa).

ATP-binding residues include Ser-189, Ser-190, Gly-191, Thr-192, Thr-193, and Lys-197. Residue Tyr-237 coordinates (E)-4-coumaroyl-AMP. CoA is bound at residue Arg-258. Residues 260 to 331 (DLRIFLNALI…AKFPNVQVQE (72 aa)) are SBD1. (E)-4-coumaroyl-AMP-binding residues include Ala-309, Glu-331, Ala-332, and Thr-336. ATP contacts are provided by Glu-331, Ala-332, Thr-336, Asp-420, and Arg-435. The interval 332 to 399 (AYGLTEHSCI…VRSQCVMQGY (68 aa)) is SBD2. Lys-437 and Lys-441 together coordinate (E)-4-coumaroyl-AMP. The CoA site is built by Lys-443 and Gly-444. Residue Lys-526 coordinates ATP.

Belongs to the ATP-dependent AMP-binding enzyme family. Interacts with TKPR1, PKSA and PKSB. It depends on Mg(2+) as a cofactor. In terms of tissue distribution, mostly confined to anther tapetal cells.

Its subcellular location is the endoplasmic reticulum. It carries out the reaction (E)-4-coumarate + ATP + CoA = (E)-4-coumaroyl-CoA + AMP + diphosphate. It catalyses the reaction (E)-4-coumarate + ATP + H(+) = (E)-4-coumaroyl-AMP + diphosphate. The catalysed reaction is (E)-4-coumaroyl-AMP + CoA = (E)-4-coumaroyl-CoA + AMP + H(+). In terms of biological role, carboxylate--CoA ligase that may use 4-coumarate as substrate. Follows a two-step reaction mechanism, wherein the carboxylate substrate first undergoes adenylation by ATP, followed by a thioesterification in the presence of CoA to yield the final CoA thioester. This is 4-coumarate--CoA ligase-like 1 from Arabidopsis thaliana (Mouse-ear cress).